We begin with the raw amino-acid sequence, 273 residues long: Large ribosomal subunit protein uL2 (273 aa).

The disordered stretch occupies residues 221-273 (RGTAMNPVDHPHGGGEGRNFGKHPVTPWGVQTKGKKTRHNKRTDKFIVRRRGK). Residues 253-273 (KGKKTRHNKRTDKFIVRRRGK) are compositionally biased toward basic residues.

The protein belongs to the universal ribosomal protein uL2 family. As to quaternary structure, part of the 50S ribosomal subunit. Forms a bridge to the 30S subunit in the 70S ribosome.

Functionally, one of the primary rRNA binding proteins. Required for association of the 30S and 50S subunits to form the 70S ribosome, for tRNA binding and peptide bond formation. It has been suggested to have peptidyltransferase activity; this is somewhat controversial. Makes several contacts with the 16S rRNA in the 70S ribosome. This chain is Large ribosomal subunit protein uL2, found in Glaesserella parasuis serovar 5 (strain SH0165) (Haemophilus parasuis).